Consider the following 210-residue polypeptide: Small ribosomal subunit protein eS8y (210 aa).

A disordered region spans residues Met-1–Arg-22. Basic residues predominate over residues Ile-8–Arg-22.

This sequence belongs to the eukaryotic ribosomal protein eS8 family.

The protein is Small ribosomal subunit protein eS8y (RPS8B) of Arabidopsis thaliana (Mouse-ear cress).